A 595-amino-acid chain; its full sequence is Guanylate-binding protein 3 (595 aa).

A GTPase domain (Globular) region spans residues M1–C309. The GB1/RHD3-type G domain maps to T35–K276. GTP is bound by residues G45 to S52, L67 to S69, and D97 to L101. Residues E482–I595 adopt a coiled-coil conformation.

Belongs to the TRAFAC class dynamin-like GTPase superfamily. GB1/RHD3 GTPase family. GB1 subfamily. Heterodimer with other family members, including GBP1, GBP2 and GBP5. Dimerization regulates subcellular location.

Its subcellular location is the cytoplasm. The protein resides in the perinuclear region. The protein localises to the golgi apparatus membrane. It carries out the reaction GTP + H2O = GDP + phosphate + H(+). Its function is as follows. Interferon (IFN)-inducible GTPase that plays important roles in innate immunity against a diverse range of bacterial, viral and protozoan pathogens. Hydrolyzes GTP very efficiently; GDP rather than GMP is the major reaction product. Following infection, recruited to the pathogen-containing vacuoles or vacuole-escaped bacteria and acts as a positive regulator of inflammasome assembly by promoting the release of inflammasome ligands from bacteria. Acts by promoting lysis of pathogen-containing vacuoles, releasing pathogens into the cytosol. Following pathogen release in the cytosol, promotes recruitment of proteins that mediate bacterial cytolysis: this liberates ligands that are detected by inflammasomes, such as lipopolysaccharide (LPS) that activates the non-canonical CASP4/CASP11 inflammasome or double-stranded DNA (dsDNA) that activates the AIM2 inflammasome. Exhibits antiviral activity against influenza virus. In terms of biological role, shows the most prominent antiviral activity in epithelial cells. The sequence is that of Guanylate-binding protein 3 (GBP3) from Homo sapiens (Human).